The chain runs to 181 residues: Oligoribonuclease (181 aa).

In terms of domain architecture, Exonuclease spans 8–171 (LIWVDLEMTG…DDIHDSIAEL (164 aa)). Tyrosine 129 is an active-site residue.

The protein belongs to the oligoribonuclease family.

The protein localises to the cytoplasm. Functionally, 3'-to-5' exoribonuclease specific for small oligoribonucleotides. The chain is Oligoribonuclease from Photobacterium profundum (strain SS9).